Reading from the N-terminus, the 284-residue chain is MELSFTKMHGTGNDFIMVNGSNYPDLDFSKLARQLCRRHFSIGADGLIIVLPPESVEHDFRMRIFNADGSEAEMCGNGIRCFAHYLRENNLTTRDVLKIETLAGIITPEIVSYNGDKSLIKVNMGRPHFKSEEIPVNIEDELDYVKNFPLKIGNKKLNINCVSMGNPHTIIFVEDVNQIPVSTWGQEIEHNPLFPQKTNVEFIQIQSEDEIIMRVWERGSGITLACGTGACASVVAGIKNGLLKNMVTVHLPGGDLNIEWQEQDVFMTGPAESVYTGKIVIQEG.

Positions 13 and 66 each coordinate substrate. Cys-75 serves as the catalytic Proton donor. Substrate contacts are provided by residues 76–77, Asn-166, Asn-199, and 217–218; these read GN and ER. Cys-226 serves as the catalytic Proton acceptor. A substrate-binding site is contributed by 227 to 228; it reads GT.

The protein belongs to the diaminopimelate epimerase family. As to quaternary structure, homodimer.

The protein localises to the cytoplasm. The catalysed reaction is (2S,6S)-2,6-diaminopimelate = meso-2,6-diaminopimelate. It participates in amino-acid biosynthesis; L-lysine biosynthesis via DAP pathway; DL-2,6-diaminopimelate from LL-2,6-diaminopimelate: step 1/1. In terms of biological role, catalyzes the stereoinversion of LL-2,6-diaminopimelate (L,L-DAP) to meso-diaminopimelate (meso-DAP), a precursor of L-lysine and an essential component of the bacterial peptidoglycan. This Halothermothrix orenii (strain H 168 / OCM 544 / DSM 9562) protein is Diaminopimelate epimerase.